The following is a 118-amino-acid chain: Cell division protein FtsB (118 aa).

The Cytoplasmic portion of the chain corresponds to 1-6 (MRNWRW). A helical transmembrane segment spans residues 7–24 (LLLVLAALLSWLQHRFWF). Topologically, residues 25–118 (GPGNSGEVRM…DLAQPRREKR (94 aa)) are periplasmic. Positions 30–66 (GEVRMLQVQIVQQHQENERLRQRNASLAAEVKNLKDG) form a coiled coil. The segment at 97 to 118 (PLPNDTSADHGVDLAQPRREKR) is disordered. Positions 103-118 (SADHGVDLAQPRREKR) are enriched in basic and acidic residues.

This sequence belongs to the FtsB family. In terms of assembly, part of a complex composed of FtsB, FtsL and FtsQ.

It is found in the cell inner membrane. Essential cell division protein. May link together the upstream cell division proteins, which are predominantly cytoplasmic, with the downstream cell division proteins, which are predominantly periplasmic. This is Cell division protein FtsB from Xylella fastidiosa (strain 9a5c).